A 245-amino-acid polypeptide reads, in one-letter code: Myozenin-3 (245 aa).

Residue Ser31 is modified to Phosphoserine. Positions 50–67 are binding to ACTN2, PPP3CA and TCAP; the sequence is LLFQKRQRRVQKFTFELS. The interval 67–108 is binding to FLNC; it reads SESLQAILASSARGKVAGRAAQATVPNGLEEQNHHSETHVFQ. The disordered stretch occupies residues 93-134; sequence NGLEEQNHHSETHVFQGSPGDPGITHLGAAGTGSVRSPSALA. The binding to ACTN2 stretch occupies residues 180–201; it reads PIPRDYRNFNKTPVPFGGPHVR.

The protein belongs to the myozenin family. Interacts with ACTN2, LDB3, FLNC, PPP3CA and TCAP. As to expression, expressed specifically in skeletal muscle and is enriched in fast-twitch muscle fibers. Not detected in heart.

The protein localises to the cytoplasm. It is found in the myofibril. The protein resides in the sarcomere. Its subcellular location is the z line. Its function is as follows. Myozenins may serve as intracellular binding proteins involved in linking Z line proteins such as alpha-actinin, gamma-filamin, TCAP/telethonin, LDB3/ZASP and localizing calcineurin signaling to the sarcomere. Plays an important role in the modulation of calcineurin signaling. May play a role in myofibrillogenesis. The polypeptide is Myozenin-3 (Mus musculus (Mouse)).